The following is a 786-amino-acid chain: Keratin, type I cytoskeletal 9 (786 aa).

The tract at residues 1–21 (MNCRQFLSSHCSRDSSGGGGG) is disordered. Residues 1 to 136 (MNCRQFLSSH…SGAGGILGAD (136 aa)) are head. Residue Ser-52 is modified to Phosphoserine. Residues 137 to 172 (EKTTMQDLNSRLASYLDKVQALEDANKELESKIREW) are coil 1A. Positions 137 to 449 (EKTTMQDLNS…SLLEGGQEDF (313 aa)) constitute an IF rod domain. Positions 173–191 (YDKQGSRTFHRDYSPYYDT) are linker 1. Positions 192-283 (IEDLKNQIVN…KNHEDEMSQL (92 aa)) are coil 1B. A linker 12 region spans residues 284-306 (TGQNSGDVNVEMNAAPGRDLTKI). Residues 307-445 (LNDMREEYER…KTYRSLLEGG (139 aa)) form a coil 2 region. The segment at 446 to 760 (QEDFESHESG…GGGSGSKGGS (315 aa)) is tail. Residues 447 to 786 (EDFESHESGQ…DDTQGYHIQY (340 aa)) form a disordered region. 2 stretches are compositionally biased toward gly residues: residues 460 to 657 (GSGG…GGSG) and 664 to 761 (SSSG…GGSG). Low complexity predominate over residues 762–773 (RSSQVQSSSSKS).

This sequence belongs to the intermediate filament family. In terms of assembly, heterotetramer of two type I and two type II keratins.

In terms of biological role, may serve an important special function either in the mature palmar and plantar skin tissue or in the morphogenetic program of the formation of these tissues. Plays a role in keratin filament assembly. This chain is Keratin, type I cytoskeletal 9, found in Canis lupus familiaris (Dog).